A 433-amino-acid chain; its full sequence is N-lysine methyltransferase SMYD2 (433 aa).

One can recognise an SET domain in the interval 7-241 (GGLERFCSPG…PGEEVFTSYI (235 aa)). An S-adenosyl-L-methionine-binding site is contributed by 17-19 (KGR). Zn(2+) is bound by residues Cys-52, Cys-55, Cys-65, Cys-68, Cys-74, Cys-78, His-86, and Cys-90. The MYND-type zinc finger occupies 52-90 (CEFCFARKEGLSKCGRCKQAFYCNVECQREDWPMHKLEC). Residues His-137, 206–207 (NH), and 258–260 (YFF) each bind S-adenosyl-L-methionine.

This sequence belongs to the class V-like SAM-binding methyltransferase superfamily. As to quaternary structure, interacts with RNA polymerase II and HELZ. Interacts with SIN3A and HDAC1. Interacts (via MYND-type zinc finger) with EPB41L3. Interacts (via SET domain) with p53/TP53. Interacts with RB1 and HSP90AA1.

The protein resides in the cytoplasm. The protein localises to the cytosol. It is found in the nucleus. The enzyme catalyses L-lysyl(4)-[histone H3] + 3 S-adenosyl-L-methionine = N(6),N(6),N(6)-trimethyl-L-lysyl(4)-[histone H3] + 3 S-adenosyl-L-homocysteine + 3 H(+). It carries out the reaction L-lysyl-[protein] + S-adenosyl-L-methionine = N(6)-methyl-L-lysyl-[protein] + S-adenosyl-L-homocysteine + H(+). Protein-lysine N-methyltransferase that methylates both histones and non-histone proteins, including p53/TP53 and RB1. Specifically trimethylates histone H3 'Lys-4' (H3K4me3) in vivo. The activity requires interaction with HSP90alpha. Shows even higher methyltransferase activity on p53/TP53. Monomethylates 'Lys-370' of p53/TP53, leading to decreased DNA-binding activity and subsequent transcriptional regulation activity of p53/TP53. Monomethylates RB1 at 'Lys-860'. In Bos taurus (Bovine), this protein is N-lysine methyltransferase SMYD2 (SMYD2).